Here is a 142-residue protein sequence, read N- to C-terminus: Large ribosomal subunit protein uL13 (142 aa).

It belongs to the universal ribosomal protein uL13 family. Part of the 50S ribosomal subunit.

This protein is one of the early assembly proteins of the 50S ribosomal subunit, although it is not seen to bind rRNA by itself. It is important during the early stages of 50S assembly. This Proteus mirabilis (strain HI4320) protein is Large ribosomal subunit protein uL13.